Here is a 2904-residue protein sequence, read N- to C-terminus: Protein eyes shut homolog (2904 aa).

Positions 1–23 (MRNPKLAIIVFLLSCVIYGPVYS) are cleaved as a signal peptide. N-linked (GlcNAc...) asparagine glycans are attached at residues asparagine 41 and asparagine 135. EGF-like domains lie at 174-216 (KPQL…RYCE), 217-259 (NVDG…VNCS), 263-298 (GNQN…TYCE), and 300-336 (KRLF…LNCE). Cystine bridges form between cysteine 178-cysteine 193, cysteine 187-cysteine 204, cysteine 206-cysteine 215, cysteine 221-cysteine 232, cysteine 226-cysteine 247, and cysteine 249-cysteine 258. Asparagine 257 and asparagine 266 each carry an N-linked (GlcNAc...) asparagine glycan. Cystine bridges form between cysteine 267–cysteine 276, cysteine 271–cysteine 286, cysteine 288–cysteine 297, cysteine 304–cysteine 315, cysteine 309–cysteine 324, and cysteine 326–cysteine 335. The N-linked (GlcNAc...) asparagine glycan is linked to asparagine 362. 3 EGF-like domains span residues 375 to 411 (QAEV…KNCE), 413 to 451 (IIDF…EFCQ), and 453 to 496 (LENA…PYCE). 12 cysteine pairs are disulfide-bonded: cysteine 379-cysteine 390, cysteine 384-cysteine 399, cysteine 401-cysteine 410, cysteine 417-cysteine 430, cysteine 424-cysteine 439, cysteine 441-cysteine 450, cysteine 457-cysteine 470, cysteine 464-cysteine 484, cysteine 486-cysteine 495, cysteine 502-cysteine 513, cysteine 507-cysteine 522, and cysteine 524-cysteine 533. The region spanning 498–534 (EVNECDSSPCQHQGTCTDFVGYYKCTCPSGYTGIDCE) is the EGF-like 8; calcium-binding domain. Asparagine 544 carries N-linked (GlcNAc...) asparagine glycosylation. The EGF-like 9 domain occupies 565 to 603 (HTPCPHYLQPCANGGHCVLHNITSYSCVCAPGWTGATCL). Cystine bridges form between cysteine 568-cysteine 581, cysteine 575-cysteine 591, cysteine 593-cysteine 602, cysteine 609-cysteine 620, cysteine 614-cysteine 629, cysteine 631-cysteine 640, cysteine 645-cysteine 656, cysteine 650-cysteine 665, cysteine 667-cysteine 676, cysteine 683-cysteine 694, cysteine 688-cysteine 703, cysteine 705-cysteine 714, cysteine 721-cysteine 732, cysteine 726-cysteine 741, cysteine 743-cysteine 752, cysteine 759-cysteine 772, cysteine 764-cysteine 781, cysteine 783-cysteine 792, cysteine 799-cysteine 810, cysteine 804-cysteine 819, cysteine 821-cysteine 830, cysteine 837-cysteine 848, cysteine 842-cysteine 857, cysteine 859-cysteine 868, cysteine 875-cysteine 886, cysteine 880-cysteine 895, cysteine 897-cysteine 906, cysteine 913-cysteine 924, cysteine 918-cysteine 933, cysteine 935-cysteine 944, cysteine 951-cysteine 962, cysteine 956-cysteine 971, cysteine 973-cysteine 982, cysteine 987-cysteine 999, cysteine 993-cysteine 1014, cysteine 1016-cysteine 1025, cysteine 1032-cysteine 1042, cysteine 1037-cysteine 1051, cysteine 1053-cysteine 1062, cysteine 1069-cysteine 1080, cysteine 1074-cysteine 1089, cysteine 1091-cysteine 1100, cysteine 1107-cysteine 1118, cysteine 1112-cysteine 1127, cysteine 1129-cysteine 1138, cysteine 1145-cysteine 1156, cysteine 1150-cysteine 1167, cysteine 1169-cysteine 1178, cysteine 1185-cysteine 1198, cysteine 1192-cysteine 1208, cysteine 1210-cysteine 1219, cysteine 1226-cysteine 1237, cysteine 1231-cysteine 1246, cysteine 1248-cysteine 1257, cysteine 1264-cysteine 1275, cysteine 1269-cysteine 1284, cysteine 1286-cysteine 1295, cysteine 1302-cysteine 1313, cysteine 1307-cysteine 1322, cysteine 1324-cysteine 1333, cysteine 1340-cysteine 1351, cysteine 1345-cysteine 1360, cysteine 1362-cysteine 1371, cysteine 1378-cysteine 1388, cysteine 1383-cysteine 1397, cysteine 1399-cysteine 1408, cysteine 1415-cysteine 1426, cysteine 1420-cysteine 1435, cysteine 1437-cysteine 1446, cysteine 1453-cysteine 1469, cysteine 1463-cysteine 1479, cysteine 1481-cysteine 1490, cysteine 1497-cysteine 1508, cysteine 1502-cysteine 1517, cysteine 1519-cysteine 1528, cysteine 1535-cysteine 1545, cysteine 1540-cysteine 1556, and cysteine 1558-cysteine 1567. Residue asparagine 585 is glycosylated (N-linked (GlcNAc...) asparagine). The region spanning 605–641 (NINECVQHRCQNRATCVDEVGGYSCLCGHGYTGVHCE) is the EGF-like 10; calcium-binding domain. In terms of domain architecture, EGF-like 11 spans 642–677 (LDFCSGHQCSEHAVCVDQQHNYTCRCMLGYEGTLCE). An N-linked (GlcNAc...) asparagine glycan is attached at asparagine 662. The region spanning 679–715 (ETDECKSAPCTNNATCIDLVAGYQCLCAPGFKGRTCS) is the EGF-like 12; calcium-binding domain. Residue asparagine 691 is glycosylated (N-linked (GlcNAc...) asparagine). 3 consecutive EGF-like domains span residues 717 to 753 (SMNE…HDCS), 755 to 793 (PATG…LFCE), and 795 to 831 (SINH…RLCE). The EGF-like 16; calcium-binding domain maps to 833–869 (NIDDCLDKPCGALSICKDGINAYDCFCAPGFVGNNCE). Positions 871-907 (EVNECLSQPCQNGASCSDELNSFSCLCLAGTTGSLCE) constitute an EGF-like 17; calcium-binding domain. In terms of domain architecture, EGF-like 18; calcium-binding spans 909–945 (NIDECQSSPCMNNGTCLDLSDGFKCICPSGFSGPECS). Asparagine 921 carries N-linked (GlcNAc...) asparagine glycosylation. In terms of domain architecture, EGF-like 19; calcium-binding spans 947 to 983 (DINECVSYPCKNGGSCIDQPGNYYCRCLAPFKGLNCE). The EGF-like 20 domain occupies 984 to 1026 (LLPCEAVNPCDNGAECVEEADLVLFPLGFQCRCRKGFTGPRCE). One can recognise an EGF-like 21; calcium-binding domain in the interval 1028–1063 (NIDECSSNPCLNGFCYDAVDGFYCLCNPGYAGVRCE). Residues 1065–1101 (HINDCASNMCENNSTCVDLHLSYNCLCLPGWEGEYCQ) enclose the EGF-like 22 domain. N-linked (GlcNAc...) asparagine glycosylation occurs at asparagine 1077. The EGF-like 23; calcium-binding domain maps to 1103–1139 (ETNECLSNPCKNNATCTDLLNAYRCVCPQGWTGLDCD). N-linked (GlcNAc...) asparagine glycosylation is present at asparagine 1115. EGF-like domains lie at 1141-1179 (DVKE…PLCE) and 1181-1220 (PYDP…TRCE). The N-linked (GlcNAc...) asparagine glycan is linked to asparagine 1195. One can recognise an EGF-like 26; calcium-binding domain in the interval 1222-1258 (DSDDCVSRPCQNRGICVDGVNSYSCFCEPGFSGLHCE). Positions 1260-1296 (DINECASNPCQNQAVCQDLVNGFQCSCVPGYFGPHCN) constitute an EGF-like 27; calcium-binding domain. In terms of domain architecture, EGF-like 28; calcium-binding spans 1298 to 1334 (DVNECDSSPCLHESVCINKPGGFACVCSAGFSGKWCE). The EGF-like 29; calcium-binding domain maps to 1336–1372 (NVDECKSNPCRNNGSCIDGLNGYQCVCSRGFMGDHCE). An N-linked (GlcNAc...) asparagine glycan is attached at asparagine 1348. The region spanning 1374–1409 (NTDECSSGPCVHGSCLDEIDAFSCQCEVGWTGHRCQ) is the EGF-like 30; calcium-binding domain. The region spanning 1411–1447 (NINECEAHPCLNGGSCVDLLDKYACICADGFTGKNCD) is the EGF-like 31; calcium-binding domain. An EGF-like 32 domain is found at 1449-1491 (DQNVCLQTSLNFSLCFNGGTCVDGPGVNFTCSCRPGFMGDFCE). Asparagine 1459 and asparagine 1476 each carry an N-linked (GlcNAc...) asparagine glycan. Residues 1493–1529 (EMNECCSEPCFNGAICQDLINGYQCHCRPGWTGLHCE) form the EGF-like 33; calcium-binding domain. Positions 1531-1568 (DINECLLQPCNQGMCIQNEPGHGYTCFCRPGFVGENCE) constitute an EGF-like 34 domain. Asparagine 1591, asparagine 1755, and asparagine 1788 each carry an N-linked (GlcNAc...) asparagine glycan. Residues 1640 to 1818 (ASFGGYSGNS…AIARNNVDNC (179 aa)) form the Laminin G-like 1 domain. Cystine bridges form between cysteine 1792-cysteine 1818, cysteine 1860-cysteine 1871, cysteine 1865-cysteine 1885, and cysteine 1887-cysteine 1896. The EGF-like 35 domain maps to 1856 to 1897 (PAPVCPQGICLNGGTCRPVSLPSGASSFFCDCPLHFTGRLCE). One can recognise a Laminin G-like 2 domain in the interval 1902–2102 (VFSPRFDGNS…NIQNCDAAVC (201 aa)). Residues asparagine 2025 and asparagine 2064 are each glycosylated (N-linked (GlcNAc...) asparagine). Disulfide bonds link cysteine 2071–cysteine 2102, cysteine 2102–cysteine 2113, cysteine 2107–cysteine 2122, cysteine 2124–cysteine 2133, cysteine 2138–cysteine 2149, cysteine 2143–cysteine 2159, and cysteine 2161–cysteine 2170. EGF-like domains lie at 2098–2134 (DAAV…KLCQ) and 2135–2171 (FTAC…LLCD). Residues asparagine 2175 and asparagine 2216 are each glycosylated (N-linked (GlcNAc...) asparagine). One can recognise a Laminin G-like 3 domain in the interval 2182–2372 (SGLDEFGYSS…PLSGRNVGQC (191 aa)). Intrachain disulfides connect cysteine 2339–cysteine 2372, cysteine 2377–cysteine 2388, cysteine 2382–cysteine 2397, cysteine 2399–cysteine 2408, cysteine 2415–cysteine 2431, cysteine 2425–cysteine 2440, and cysteine 2442–cysteine 2451. EGF-like domains are found at residues 2373–2409 (GVNP…ALCS) and 2411–2452 (KVSF…LHCQ). In terms of domain architecture, Laminin G-like 4 spans 2459 to 2642 (DPFFSGNQSS…NVGDWDGTAC (184 aa)). Residues asparagine 2465, asparagine 2528, and asparagine 2570 are each glycosylated (N-linked (GlcNAc...) asparagine). 2 consecutive EGF-like domains span residues 2638-2675 (DGTA…SRCQ) and 2676-2714 (QSIQ…THCD). 6 disulfide bridges follow: cysteine 2642/cysteine 2653, cysteine 2647/cysteine 2663, cysteine 2665/cysteine 2674, cysteine 2680/cysteine 2691, cysteine 2685/cysteine 2702, and cysteine 2704/cysteine 2713. A glycan (N-linked (GlcNAc...) asparagine) is linked at asparagine 2694. Positions 2719-2894 (LKTIRFIGNS…TKQLQFLQTC (176 aa)) constitute a Laminin G-like 5 domain. Residues asparagine 2750 and asparagine 2816 are each glycosylated (N-linked (GlcNAc...) asparagine).

Belongs to the EYS family. Expressed in retina where it localizes between the retinal pigment epithelium and the outer nuclear layer (at protein level).

It is found in the cell projection. The protein resides in the cilium. Its subcellular location is the cytoplasm. The protein localises to the cytoskeleton. It localises to the cilium axoneme. It is found in the secreted. The protein resides in the extracellular space. Its subcellular location is the extracellular matrix. The protein localises to the interphotoreceptor matrix. Functionally, required to maintain the integrity of photoreceptor cells. Specifically required for normal morphology of the photoreceptor ciliary pocket, and might thus facilitate protein trafficking between the photoreceptor inner and outer segments via the transition zone. This is Protein eyes shut homolog from Danio rerio (Zebrafish).